The sequence spans 180 residues: Thiol:disulfide interchange protein TxlA homolog (180 aa).

A helical transmembrane segment spans residues 10–26; that stretch reads LLAVVAIALSAAVYLGF. In terms of domain architecture, Thioredoxin spans 34-143; sequence SLEAQAQRAI…LEQNITALVA (110 aa). Cysteines 64 and 67 form a disulfide.

This sequence belongs to the thioredoxin family.

Its subcellular location is the cell membrane. Functionally, required for disulfide bond formation in some proteins. Acts by transferring its disulfide bond to other proteins and is reduced in the process. This Synechocystis sp. (strain ATCC 27184 / PCC 6803 / Kazusa) protein is Thiol:disulfide interchange protein TxlA homolog (txlA).